We begin with the raw amino-acid sequence, 377 residues long: MAEKIRVGLFFGGNSSEHDVSKRSAKNYYDALDPEKYQIFPVLISKKGIMIDSETSKRVLFGEDEDELLAGLPNKNADIFGPIDSIRNLKLDVLFPSVHGNLGEDGTLAGLFRLMNIPYVGSGLRAHAISFDKVITKELMTVNGIRNTKYIVIFQNDKNKPDWDSVSKQLGEVVFVKAANQGSSVGVSRVTNAEEYENALRDSFQYDEKLLVEKAVESPTELEIGLLGNDRVITSPIGAHWAPGQDHGSGWFDYKNKFVDNSKMKYQIPAKISPAKSKELENMAVKAYKVLGIKGFARIDFLMSKDGEIFLSEPNTLPGNTNMSLFPILFEAAGMNRSQQAEKLIQLAFEEFKREQNISYSFKELGSEKLGQFDIKK.

Residues 137–346 form the ATP-grasp domain; that stretch reads KELMTVNGIR…RSQQAEKLIQ (210 aa). An ATP-binding site is contributed by 167–222; that stretch reads SKQLGEVVFVKAANQGSSVGVSRVTNAEEYENALRDSFQYDEKLLVEKAVESPTEL. 3 residues coordinate Mg(2+): Asp-300, Glu-313, and Asn-315.

It belongs to the D-alanine--D-alanine ligase family. Requires Mg(2+) as cofactor. Mn(2+) is required as a cofactor.

Its subcellular location is the cytoplasm. The catalysed reaction is 2 D-alanine + ATP = D-alanyl-D-alanine + ADP + phosphate + H(+). The protein operates within cell wall biogenesis; peptidoglycan biosynthesis. Functionally, cell wall formation. This is D-alanine--D-alanine ligase from Oenococcus oeni (strain ATCC BAA-331 / PSU-1).